The following is a 494-amino-acid chain: 4-trimethylaminobutyraldehyde dehydrogenase (494 aa).

Position 2 is an N-acetylserine (Ser2). Lys30 carries the N6-acetyllysine; alternate modification. At Lys30 the chain carries N6-succinyllysine; alternate. Lys59 carries the post-translational modification N6-succinyllysine. NAD(+) is bound by residues Lys180 and 232–236 (GSVPT). Glu254 acts as the Proton acceptor in catalysis. Cys288 acts as the Nucleophile in catalysis. 2 positions are modified to N6-acetyllysine: Lys298 and Lys344. Glu391 is an NAD(+) binding site.

The protein belongs to the aldehyde dehydrogenase family. Homotetramer.

Its subcellular location is the cytoplasm. The protein resides in the cytosol. The enzyme catalyses 4-(trimethylamino)butanal + NAD(+) + H2O = 4-(trimethylamino)butanoate + NADH + 2 H(+). It carries out the reaction an aldehyde + NAD(+) + H2O = a carboxylate + NADH + 2 H(+). The catalysed reaction is 4-aminobutanal + NAD(+) + H2O = 4-aminobutanoate + NADH + 2 H(+). It catalyses the reaction formaldehyde + NAD(+) + H2O = formate + NADH + 2 H(+). The enzyme catalyses acetaldehyde + NAD(+) + H2O = acetate + NADH + 2 H(+). It carries out the reaction imidazole-4-acetaldehyde + NAD(+) + H2O = imidazole-4-acetate + NADH + 2 H(+). The catalysed reaction is acrolein + NAD(+) + H2O = acrylate + NADH + 2 H(+). It catalyses the reaction (5-hydroxyindol-3-yl)acetaldehyde + NAD(+) + H2O = (5-hydroxyindol-3-yl)acetate + NADH + 2 H(+). The enzyme catalyses 3,4-dihydroxyphenylacetaldehyde + NAD(+) + H2O = 3,4-dihydroxyphenylacetate + NADH + 2 H(+). It carries out the reaction spermine monoaldehyde + NAD(+) + H2O = N-(2-carboxyethyl)spermidine + NADH + 2 H(+). The catalysed reaction is propanal + NAD(+) + H2O = propanoate + NADH + 2 H(+). It catalyses the reaction butanal + NAD(+) + H2O = butanoate + NADH + 2 H(+). The enzyme catalyses pentanal + NAD(+) + H2O = pentanoate + NADH + 2 H(+). It carries out the reaction hexanal + NAD(+) + H2O = hexanoate + NADH + 2 H(+). It functions in the pathway amine and polyamine biosynthesis; carnitine biosynthesis. In terms of biological role, converts gamma-trimethylaminobutyraldehyde into gamma-butyrobetaine with high efficiency (in vitro). Can catalyze the irreversible oxidation of a broad range of aldehydes to the corresponding acids in an NAD-dependent reaction, but with low efficiency. Catalyzes the oxidation of aldehydes arising from biogenic amines and polyamines. The sequence is that of 4-trimethylaminobutyraldehyde dehydrogenase (ALDH9A1) from Bos taurus (Bovine).